Consider the following 513-residue polypeptide: CUGBP Elav-like family member 2 (513 aa).

RRM domains lie at 35–118 (IKMF…PADS), 127–207 (RKLF…FADT), and 428–506 (ANLF…LKRS).

Belongs to the CELF/BRUNOL family.

It localises to the nucleus. It is found in the cytoplasm. RNA-binding protein implicated in the regulation of several post-transcriptional events. May be involved in pre-mRNA alternative splicing, mRNA translation repression and stability. This chain is CUGBP Elav-like family member 2 (celf2), found in Xenopus tropicalis (Western clawed frog).